The following is an 831-amino-acid chain: Probable glucan 1,3-beta-glucosidase D (831 aa).

6 stretches are compositionally biased toward basic and acidic residues: residues 1 to 24, 44 to 56, 79 to 93, 102 to 115, 137 to 151, and 198 to 213; these read MPSH…YREV, RRDD…RSHE, RSHD…RSRA, SRRD…EYRR, RDGQ…DREA, and QRER…MESK. Disordered regions lie at residues 1 to 179 and 192 to 241; these read MPSH…SGSH and HYDE…GQSK. Residues 1–297 are Cytoplasmic-facing; that stretch reads MPSHSRSRDR…AQPPFWKRKK (297 aa). The helical; Signal-anchor for type II membrane protein transmembrane segment at 298 to 318 threads the bilayer; the sequence is WWIVIGVLVVVLAIVIPVAVV. Residues 319–831 lie on the Extracellular side of the membrane; the sequence is MSKKHGHDDD…PSFGDLPEYY (513 aa). Residues Asn-376, Asn-381, Asn-393, Asn-410, Asn-442, Asn-546, and Asn-558 are each glycosylated (N-linked (GlcNAc...) asparagine). Catalysis depends on Glu-597, which acts as the Proton donor. 4 N-linked (GlcNAc...) asparagine glycosylation sites follow: Asn-610, Asn-636, Asn-669, and Asn-689. Glu-702 (nucleophile) is an active-site residue.

It belongs to the glycosyl hydrolase 5 (cellulase A) family.

It localises to the cell membrane. It carries out the reaction Successive hydrolysis of beta-D-glucose units from the non-reducing ends of (1-&gt;3)-beta-D-glucans, releasing alpha-glucose.. Glucosidase involved in the degradation of cellulosic biomass. Active on lichenan. This chain is Probable glucan 1,3-beta-glucosidase D (exgD), found in Aspergillus oryzae (strain ATCC 42149 / RIB 40) (Yellow koji mold).